A 142-amino-acid polypeptide reads, in one-letter code: MKTFSAKAHEVTREWYVIDATDKVLGRVASEVARRLRGKHKPEFTPHVDTGDFIIIINASKLKVTGNKTLDKKYYRHSGYPGGIYETTFGKMQERFPGRALEKAVKGMLPKGPLGYAMIKKLKVYAEATHPHSAQQPKALEI.

It belongs to the universal ribosomal protein uL13 family. In terms of assembly, part of the 50S ribosomal subunit.

Functionally, this protein is one of the early assembly proteins of the 50S ribosomal subunit, although it is not seen to bind rRNA by itself. It is important during the early stages of 50S assembly. This is Large ribosomal subunit protein uL13 from Burkholderia cenocepacia (strain ATCC BAA-245 / DSM 16553 / LMG 16656 / NCTC 13227 / J2315 / CF5610) (Burkholderia cepacia (strain J2315)).